The chain runs to 347 residues: 4-hydroxy-tetrahydrodipicolinate reductase 1, chloroplastic (347 aa).

A chloroplast-targeting transit peptide spans 1-51 (MATNGLMASSSVFLHRPRIAFASRTNQTVGKYGKGRVSFMGIGTRRLPVVL). N-acetylserine is present on serine 52. NAD(+) contacts are provided by residues 79 to 84 (GCSGKM), 171 to 173 (GTT), and 194 to 197 (SPQM). Histidine 230 serves as the catalytic Proton donor/acceptor. The active-site Proton donor is the lysine 234. Residue 239–240 (GT) participates in (S)-2,3,4,5-tetrahydrodipicolinate binding.

Belongs to the DapB family.

The protein resides in the plastid. It localises to the chloroplast. The enzyme catalyses (S)-2,3,4,5-tetrahydrodipicolinate + NAD(+) + H2O = (2S,4S)-4-hydroxy-2,3,4,5-tetrahydrodipicolinate + NADH + H(+). It catalyses the reaction (S)-2,3,4,5-tetrahydrodipicolinate + NADP(+) + H2O = (2S,4S)-4-hydroxy-2,3,4,5-tetrahydrodipicolinate + NADPH + H(+). The protein operates within amino-acid biosynthesis; L-lysine biosynthesis via DAP pathway; (S)-tetrahydrodipicolinate from L-aspartate: step 4/4. Its function is as follows. Catalyzes the conversion of 4-hydroxy-tetrahydrodipicolinate (HTPA) to tetrahydrodipicolinate. This chain is 4-hydroxy-tetrahydrodipicolinate reductase 1, chloroplastic (DAPB1), found in Arabidopsis thaliana (Mouse-ear cress).